Consider the following 126-residue polypeptide: Holo-[acyl-carrier-protein] synthase (126 aa).

Mg(2+) contacts are provided by aspartate 9 and glutamate 58.

The protein belongs to the P-Pant transferase superfamily. AcpS family. It depends on Mg(2+) as a cofactor.

The protein localises to the cytoplasm. It carries out the reaction apo-[ACP] + CoA = holo-[ACP] + adenosine 3',5'-bisphosphate + H(+). Its function is as follows. Transfers the 4'-phosphopantetheine moiety from coenzyme A to a Ser of acyl-carrier-protein. This chain is Holo-[acyl-carrier-protein] synthase, found in Sodalis glossinidius (strain morsitans).